We begin with the raw amino-acid sequence, 132 residues long: Agouti-signaling protein (132 aa).

Positions 1 to 22 (MDVTRLLLATLLVFLCFFTANS) are cleaved as a signal peptide. The N-linked (GlcNAc...) asparagine glycan is linked to Asn-39. A disordered region spans residues 61–87 (QIGRKEAEKKRSSKKEASMKKVARPRT). A compositionally biased stretch (basic and acidic residues) spans 63–79 (GRKEAEKKRSSKKEASM). 5 disulfides stabilise this stretch: Cys-93–Cys-108, Cys-100–Cys-114, Cys-107–Cys-125, Cys-111–Cys-132, and Cys-116–Cys-123. The region spanning 93–132 (CVATRNSCKPPAPACCDPCASCQCRFFRSACSCRVLSLNC) is the Agouti domain.

The protein resides in the secreted. Functionally, involved in the regulation of melanogenesis. The binding of ASP to MC1R precludes alpha-MSH initiated signaling and thus blocks production of cAMP, leading to a down-regulation of eumelanogenesis (brown/black pigment) and thus increasing synthesis of pheomelanin (yellow/red pigment). The protein is Agouti-signaling protein (ASIP) of Gorilla gorilla gorilla (Western lowland gorilla).